The following is a 300-amino-acid chain: C-4 methylsterol oxidase erg25 (300 aa).

The Fatty acid hydroxylase domain maps to 140–276 (TLFFFLEDTW…FRWWDAVLKT (137 aa)). A Histidine box-1 motif is present at residues 154–158 (HRLFH). Positions 167–171 (HKVHH) match the Histidine box-2 motif. Residues 186-206 (PLEIILLGAGTVFVPLMWCYF) form a helical membrane-spanning segment. Positions 251–257 (HHDYHHM) match the Histidine box-3 motif.

Belongs to the sterol desaturase family. Heterotetramer of erg25, erg26, erg27 and erg28. Erg28 acts as a scaffold to tether erg27 and other 4,4-demethylation-related enzymes, forming a demethylation enzyme complex, in the endoplasmic reticulum. It depends on Fe cation as a cofactor.

The protein localises to the endoplasmic reticulum membrane. It carries out the reaction 4,4-dimethyl-5alpha-cholesta-8,24-dien-3beta-ol + 6 Fe(II)-[cytochrome b5] + 3 O2 + 5 H(+) = 4beta-methylzymosterol-4alpha-carboxylate + 6 Fe(III)-[cytochrome b5] + 4 H2O. The catalysed reaction is 4alpha-methylzymosterol + 6 Fe(II)-[cytochrome b5] + 3 O2 + 5 H(+) = 4alpha-carboxyzymosterol + 6 Fe(III)-[cytochrome b5] + 4 H2O. The protein operates within steroid biosynthesis; zymosterol biosynthesis; zymosterol from lanosterol: step 3/6. It functions in the pathway steroid metabolism; ergosterol biosynthesis. C-4 methylsterol oxidase; part of the third module of ergosterol biosynthesis pathway that includes by the late steps of the pathway. Erg25 is a catalytic component of the C-4 demethylation complex that catalyzes the three-step monooxygenation required for the demethylation of 4,4-dimethyl and 4alpha-methylsterols. The third module or late pathway involves the ergosterol synthesis itself through consecutive reactions that mainly occur in the endoplasmic reticulum (ER) membrane. Firstly, the squalene synthase erg9 catalyzes the condensation of 2 farnesyl pyrophosphate moieties to form squalene, which is the precursor of all steroids. Secondly, squalene is converted into lanosterol by the consecutive action of the squalene epoxidase erg1 and the lanosterol synthase erg7. The lanosterol 14-alpha-demethylase erg11/cyp1 catalyzes C14-demethylation of lanosterol to produce 4,4'-dimethyl cholesta-8,14,24-triene-3-beta-ol. In the next steps, a complex process involving various demethylation, reduction and desaturation reactions catalyzed by the C-14 reductase erg24 and the C-4 demethylation complex erg25-erg26-erg27 leads to the production of zymosterol. Erg28 likely functions in the C-4 demethylation complex reaction by tethering erg26 and Erg27 to the endoplasmic reticulum or to facilitate interaction between these proteins. Then, the sterol 24-C-methyltransferase erg6 catalyzes the methyl transfer from S-adenosyl-methionine to the C-24 of zymosterol to form fecosterol. The C-8 sterol isomerase erg2 catalyzes the reaction which results in unsaturation at C-7 in the B ring of sterols and thus converts fecosterol to episterol. The sterol-C5-desaturases erg31 and erg32 then catalyze the introduction of a C-5 double bond in the B ring to produce 5-dehydroepisterol. The C-22 sterol desaturase erg5 further converts 5-dehydroepisterol into ergosta-5,7,22,24(28)-tetraen-3beta-ol by forming the C-22(23) double bond in the sterol side chain. Finally, ergosta-5,7,22,24(28)-tetraen-3beta-ol is substrate of the C-24(28) sterol reductase erg4 to produce ergosterol. In the genus Schizosaccharomyces, a second route exists between lanosterol and fecosterol, via the methylation of lanosterol to eburicol by erg6, followed by C14-demethylation by erg11/cyp1 and C4-demethylation by the demethylation complex erg25-erg26-erg27. This Schizosaccharomyces pombe (strain 972 / ATCC 24843) (Fission yeast) protein is C-4 methylsterol oxidase erg25.